Here is a 213-residue protein sequence, read N- to C-terminus: Cytochrome c biogenesis ATP-binding export protein CcmA (213 aa).

Residues 11 to 213 (LTARNLECIR…TVTVHHLVLS (203 aa)) form the ABC transporter domain. 43-50 (GPNGSGKT) is a binding site for ATP.

This sequence belongs to the ABC transporter superfamily. CcmA exporter (TC 3.A.1.107) family. The complex is composed of two ATP-binding proteins (CcmA) and two transmembrane proteins (CcmB).

It is found in the cell inner membrane. It carries out the reaction heme b(in) + ATP + H2O = heme b(out) + ADP + phosphate + H(+). Part of the ABC transporter complex CcmAB involved in the biogenesis of c-type cytochromes; once thought to export heme, this seems not to be the case, but its exact role is uncertain. Responsible for energy coupling to the transport system. The protein is Cytochrome c biogenesis ATP-binding export protein CcmA of Nitrosomonas europaea (strain ATCC 19718 / CIP 103999 / KCTC 2705 / NBRC 14298).